The primary structure comprises 436 residues: Adenylosuccinate synthetase (436 aa).

GTP-binding positions include 12 to 18 and 40 to 42; these read GDEGKGK and GHT. D13 acts as the Proton acceptor in catalysis. Mg(2+)-binding residues include D13 and G40. IMP-binding positions include 13–16, 38–41, T128, R142, Q223, T238, and R302; these read DEGK and NAGH. The active-site Proton donor is H41. 298-304 serves as a coordination point for substrate; the sequence is TTTGRRR. GTP contacts are provided by residues R304, 330 to 332, and 412 to 414; these read KLD and SLG.

Belongs to the adenylosuccinate synthetase family. Homodimer. Mg(2+) serves as cofactor.

Its subcellular location is the cytoplasm. It carries out the reaction IMP + L-aspartate + GTP = N(6)-(1,2-dicarboxyethyl)-AMP + GDP + phosphate + 2 H(+). It participates in purine metabolism; AMP biosynthesis via de novo pathway; AMP from IMP: step 1/2. Functionally, plays an important role in the de novo pathway of purine nucleotide biosynthesis. Catalyzes the first committed step in the biosynthesis of AMP from IMP. In Prochlorococcus marinus subsp. pastoris (strain CCMP1986 / NIES-2087 / MED4), this protein is Adenylosuccinate synthetase.